Consider the following 149-residue polypeptide: Oligosaccharyltransferase complex subunit OSTC (149 aa).

Topologically, residues 1 to 32 are cytoplasmic; that stretch reads METLFRLPFAVLECPNIKLKRPGWVHMPSAMT. The chain crosses the membrane as a helical span at residues 33-53; sequence VYALVVVSYFLITGGIIYDVI. At 54 to 83 the chain is on the extracellular side; it reads VEPPSVGSMTDEHGHQRPVAFLAYRVNGQY. Residues 84 to 104 form a helical membrane-spanning segment; that stretch reads IMEGLASSFLFTMGGLGFIIL. The Cytoplasmic portion of the chain corresponds to 105–117; it reads DRSNAPNIPKLNR. The chain crosses the membrane as a helical span at residues 118–138; it reads FLLLFIGFVSVLLSFFMARVF. The Extracellular portion of the chain corresponds to 139–149; sequence MRMKLPGYLMG.

It belongs to the OSTC family. Specific component of the STT3A-containing form of the oligosaccharyltransferase (OST) complex.

The protein resides in the membrane. It participates in protein modification; protein glycosylation. Its function is as follows. Specific component of the STT3A-containing form of the oligosaccharyl transferase (OST) complex that catalyzes the initial transfer of a defined glycan (Glc(3)Man(9)GlcNAc(2) in eukaryotes) from the lipid carrier dolichol-pyrophosphate to an asparagine residue within an Asn-X-Ser/Thr consensus motif in nascent polypeptide chains, the first step in protein N-glycosylation. N-glycosylation occurs cotranslationally and the complex associates with the Sec61 complex at the channel-forming translocon complex that mediates protein translocation across the endoplasmic reticulum (ER). All subunits are required for a maximal enzyme activity. The chain is Oligosaccharyltransferase complex subunit OSTC from Gallus gallus (Chicken).